The chain runs to 276 residues: Diaminopimelate epimerase (276 aa).

Substrate-binding residues include N13, Q46, and N66. C75 (proton donor) is an active-site residue. Substrate contacts are provided by residues 76-77 (GN), N159, N192, and 210-211 (ER). The active-site Proton acceptor is C219. Residue 220–221 (GS) coordinates substrate.

It belongs to the diaminopimelate epimerase family. As to quaternary structure, homodimer.

It is found in the cytoplasm. It carries out the reaction (2S,6S)-2,6-diaminopimelate = meso-2,6-diaminopimelate. It participates in amino-acid biosynthesis; L-lysine biosynthesis via DAP pathway; DL-2,6-diaminopimelate from LL-2,6-diaminopimelate: step 1/1. Catalyzes the stereoinversion of LL-2,6-diaminopimelate (L,L-DAP) to meso-diaminopimelate (meso-DAP), a precursor of L-lysine and an essential component of the bacterial peptidoglycan. The chain is Diaminopimelate epimerase from Colwellia psychrerythraea (strain 34H / ATCC BAA-681) (Vibrio psychroerythus).